The following is a 2626-amino-acid chain: Unconventional myosin-IXa (2626 aa).

Positions 14-112 constitute a Ras-associating domain; that stretch reads NEHTLRIYPG…YRFLLREKNL (99 aa). The Myosin motor domain occupies 146-1017; the sequence is KDFDDLCSLP…ERQHLQDLLH (872 aa). The helical transmembrane segment at 175–195 threads the bilayer; the sequence is IYTYVGSILIAINPFKFLPIY. Residue 239–246 coordinates ATP; sequence GESGSGKT. Residue Ser755 is modified to Phosphoserine. An actin-binding region spans residues 908 to 919; sequence QAEPYFVKCIRS. IQ domains lie at 1021 to 1041, 1043 to 1072, 1075 to 1104, 1116 to 1145, and 1139 to 1168; these read LRRI…QQFL, LRQA…EKDA, MASA…AAVI, RHRA…KIIL, and QRNK…ERLK. Residues 1022 to 1163 are neck or regulatory domain; the sequence is RRIILLQRWF…RARQRYKALK (142 aa). The tract at residues 1164–2589 is tail; sequence EERLKETKLE…LKNVKNSPQK (1426 aa). The span at 1221-1240 shows a compositional bias: basic and acidic residues; it reads RESSMDFSKESPDKQQERGR. Positions 1221–1276 are disordered; sequence RESSMDFSKESPDKQQERGRSQSGTDLQGDVIVRQRPKSLEDLHQKKVGRAKRESR. The residue at position 1243 (Ser1243) is a Phosphoserine. Thr1245 is subject to Phosphothreonine. At Ser1259 the chain carries Phosphoserine. Positions 1265-1292 form a coiled coil; sequence QKKVGRAKRESRRMRELEQAIFSLELLK. Over residues 1266–1276 the composition is skewed to basic residues; sequence KKVGRAKRESR. Phosphoserine is present on residues Ser1300 and Ser1318. A compositionally biased stretch (polar residues) spans 1360 to 1375; it reads PSTFTNPKFDSQNNAL. Residues 1360 to 1397 form a disordered region; that stretch reads PSTFTNPKFDSQNNALSASSETSSTFSGKGASSDSEHL. The span at 1376 to 1386 shows a compositional bias: low complexity; it reads SASSETSSTFS. Positions 1493–1540 form a coiled coil; the sequence is TVLKKLEKLNIEKEKRQKQLQQQNEKEMMEQIRQQTDILEKERKAFKT. Disordered regions lie at residues 1562-1602, 1618-1673, 1689-1726, 1765-1784, and 1872-1907; these read VERP…PPKD, SRTV…SRPI, GNPQ…RMAR, SELG…SEMT, and QYHP…KRGV. Composition is skewed to basic and acidic residues over residues 1620-1632 and 1659-1669; these read TVKE…RMGT and HRSDDPSREGS. Residues 1716–1726 show a composition bias toward basic residues; that stretch reads PAHKKKARMAR. A compositionally biased stretch (polar residues) spans 1772 to 1784; the sequence is SLGQASHSDSEMT. A compositionally biased stretch (basic and acidic residues) spans 1887–1899; sequence CRKEFKENKEPSP. The residue at position 2016 (Ser2016) is a Phosphoserine. The Phorbol-ester/DAG-type zinc-finger motif lies at 2067–2116; sequence GHMFKATQYSIPTYCEYCSSLIWIMDRASVCKLCKYACHKKCCLKTTAKC. Residues 2131 to 2319 form the Rho-GAP domain; that stretch reads VELSRLTSED…LIVVEQMNKY (189 aa). The disordered stretch occupies residues 2365-2385; sequence SGKGRLHRGSHPNPSSPVIVR. The residue at position 2380 (Ser2380) is a Phosphoserine. Residues 2408–2444 are a coiled coil; the sequence is TDQQQAAMQQEEKVLTEQIENLQKEKEELTFEMLVLE. The interval 2449 to 2527 is disordered; the sequence is DDEALESEAS…NTTSSHGTRK (79 aa). The span at 2504 to 2522 shows a compositional bias: low complexity; the sequence is SLDSVSSSVSSCLSNTTSS. Ser2542 bears the Phosphoserine mark. A disordered region spans residues 2552–2614; it reads PLGQAKSLED…TVDSDCSSTQ (63 aa).

This sequence belongs to the TRAFAC class myosin-kinesin ATPase superfamily. Myosin family. Phosphorylated by ALPK1 following monosodium urate monohydrate (MSU)-induced inflammation. In terms of tissue distribution, expressed at high levels in brain, followed by testis and spleen. Expressed at very low levels, in kidney. Detected abundantly in brain and testis and at lower levels in adrenal gland, kidney, lung and spleen (at protein level). In adrenal gland it is mostly found in the medulla but not in the cortex. In brain, it is found in the cerebellum and the CA2-CA3 regions of the hippocampus.

It localises to the membrane. Its subcellular location is the cytoplasm. The protein localises to the synapse. It is found in the cell projection. The protein resides in the growth cone. Its function is as follows. Myosins are actin-based motor molecules with ATPase activity. Unconventional myosins serve in intracellular movements. Regulates Rho by stimulating it's GTPase activity in neurons. Required for the regulation of neurite branching and motor neuron axon guidance. The chain is Unconventional myosin-IXa (Myo9a) from Rattus norvegicus (Rat).